Here is a 99-residue protein sequence, read N- to C-terminus: NADH dehydrogenase [ubiquinone] 1 alpha subcomplex subunit 2 (99 aa).

An N-acetylalanine modification is found at alanine 2. A disulfide bond links cysteine 24 and cysteine 58. Lysine 64 carries the post-translational modification N6-acetyllysine; alternate. An N6-succinyllysine; alternate modification is found at lysine 64. Lysine 75 is subject to N6-acetyllysine.

This sequence belongs to the complex I NDUFA2 subunit family. In terms of assembly, complex I is composed of 45 different subunits.

It is found in the mitochondrion inner membrane. Its function is as follows. Accessory subunit of the mitochondrial membrane respiratory chain NADH dehydrogenase (Complex I), that is believed not to be involved in catalysis. Complex I functions in the transfer of electrons from NADH to the respiratory chain. The immediate electron acceptor for the enzyme is believed to be ubiquinone. This chain is NADH dehydrogenase [ubiquinone] 1 alpha subcomplex subunit 2 (NDUFA2), found in Bos taurus (Bovine).